The chain runs to 92 residues: Small ribosomal subunit protein uS19c (92 aa).

Belongs to the universal ribosomal protein uS19 family.

It is found in the plastid. The protein localises to the chloroplast. In terms of biological role, protein S19 forms a complex with S13 that binds strongly to the 16S ribosomal RNA. The protein is Small ribosomal subunit protein uS19c of Phalaenopsis aphrodite subsp. formosana (Moth orchid).